Reading from the N-terminus, the 291-residue chain is Small ribosomal subunit protein uS2 (291 aa).

The segment at 231-291 (NRGSGTTEAP…AAEAPAEDAK (61 aa)) is disordered. A compositionally biased stretch (basic and acidic residues) spans 246 to 259 (EWERELLEGSKAEE). Residues 260 to 285 (AAAAAPAENAEAPAAPAAEAPAAAEA) show a composition bias toward low complexity.

It belongs to the universal ribosomal protein uS2 family.

This is Small ribosomal subunit protein uS2 from Pseudarthrobacter chlorophenolicus (strain ATCC 700700 / DSM 12829 / CIP 107037 / JCM 12360 / KCTC 9906 / NCIMB 13794 / A6) (Arthrobacter chlorophenolicus).